Here is a 152-residue protein sequence, read N- to C-terminus: Biogenesis of lysosome-related organelles complex 1 subunit 1 (152 aa).

Belongs to the BLOC1S1 family. In terms of assembly, component of the biogenesis of lysosome-related organelles complex-1 (BLOC-1). Interacts with BLOS2 and SNX1. Expressed in the whole plant (at protein level).

The protein resides in the cytoplasm. It localises to the endosome. Functionally, component of the biogenesis of lysosome-related organelles complex-1 (BLOC-1), a complex that mediates the vacuolar degradative transport via the intracellular vesicle trafficking from the endosome to the vacuole. Probably regulates the PIN1 and PIN2 homeostasis through its interaction with SNX1. In Arabidopsis thaliana (Mouse-ear cress), this protein is Biogenesis of lysosome-related organelles complex 1 subunit 1 (BLOS1).